The following is a 298-amino-acid chain: CD-NTase-associated protein 6 (298 aa).

ATP is bound by residues 80 to 85 and 204 to 205; these read GTGKTA and RR.

This sequence belongs to the AAA ATPase family. Homohexamer, forms a 1:1:6 CdnC:Cap7:Cap6 complex.

Its function is as follows. Regulates complex assembly in a CBASS antivirus system. CBASS (cyclic oligonucleotide-based antiphage signaling system) provides immunity against bacteriophage. The CD-NTase protein synthesizes cyclic nucleotides in response to infection; these serve as specific second messenger signals. The signals activate a diverse range of effectors, leading to bacterial cell death and thus abortive phage infection. A type III CBASS system. Expression of this CBASS system (Cap18-Cap6-Cap7-CdnC-CapW-Cap17) in a susceptible E.coli (strain MG1655) confers resistance to bacteriophage P1. Binds and disassembles an active CdnC:Cap7 complex, inhibiting the complex's ability to synthesize cyclic nucleotide second messengers. An AAA+-ATPase remodeler, in the absence of foreign threat Cap6 probably maintains the Cap7 protein in its open, inactive state. Once activated (presumably by a bacteriophage protein) Cap7 binds to and activates its cognate CD-NTase (CdnC in this bacteria) to synthesize a cyclic nucleotide second messenger which leads to abortive phage infection. The chain is CD-NTase-associated protein 6 from Escherichia coli (strain KTE188).